The sequence spans 339 residues: Ketol-acid reductoisomerase (NADP(+)) (339 aa).

A KARI N-terminal Rossmann domain is found at 1–182 (MRVYYDRDAD…GGGRSGVIET (182 aa)). NADP(+) is bound by residues 24 to 27 (YGSQ), Arg-48, Ser-51, Thr-53, and 83 to 86 (DELQ). His-108 is an active-site residue. Gly-134 is an NADP(+) binding site. The KARI C-terminal knotted domain maps to 183 to 328 (TFKEECETDL…GKLRAMMPWI (146 aa)). 4 residues coordinate Mg(2+): Asp-191, Glu-195, Glu-227, and Glu-231. Residue Ser-252 coordinates substrate.

The protein belongs to the ketol-acid reductoisomerase family. Requires Mg(2+) as cofactor.

It carries out the reaction (2R)-2,3-dihydroxy-3-methylbutanoate + NADP(+) = (2S)-2-acetolactate + NADPH + H(+). The enzyme catalyses (2R,3R)-2,3-dihydroxy-3-methylpentanoate + NADP(+) = (S)-2-ethyl-2-hydroxy-3-oxobutanoate + NADPH + H(+). Its pathway is amino-acid biosynthesis; L-isoleucine biosynthesis; L-isoleucine from 2-oxobutanoate: step 2/4. It functions in the pathway amino-acid biosynthesis; L-valine biosynthesis; L-valine from pyruvate: step 2/4. Its function is as follows. Involved in the biosynthesis of branched-chain amino acids (BCAA). Catalyzes an alkyl-migration followed by a ketol-acid reduction of (S)-2-acetolactate (S2AL) to yield (R)-2,3-dihydroxy-isovalerate. In the isomerase reaction, S2AL is rearranged via a Mg-dependent methyl migration to produce 3-hydroxy-3-methyl-2-ketobutyrate (HMKB). In the reductase reaction, this 2-ketoacid undergoes a metal-dependent reduction by NADPH to yield (R)-2,3-dihydroxy-isovalerate. This Brucella abortus (strain S19) protein is Ketol-acid reductoisomerase (NADP(+)).